The following is a 382-amino-acid chain: Galactokinase (382 aa).

Residue 34 to 37 (EHTD) coordinates substrate. 124–130 (GAGLSSS) contacts ATP. Ser-130 and Glu-162 together coordinate Mg(2+). The active-site Proton acceptor is Asp-174. A substrate-binding site is contributed by Tyr-223.

The protein belongs to the GHMP kinase family. GalK subfamily.

The protein resides in the cytoplasm. It catalyses the reaction alpha-D-galactose + ATP = alpha-D-galactose 1-phosphate + ADP + H(+). Its pathway is carbohydrate metabolism; galactose metabolism. Its function is as follows. Catalyzes the transfer of the gamma-phosphate of ATP to D-galactose to form alpha-D-galactose-1-phosphate (Gal-1-P). The chain is Galactokinase from Escherichia coli O157:H7 (strain EC4115 / EHEC).